The primary structure comprises 348 residues: Holliday junction branch migration complex subunit RuvB (348 aa).

Residues 1–10 show a composition bias toward polar residues; it reads MAIVSSNAGS. Residues 1-41 are disordered; it reads MAIVSSNAGSSAPRREPVLDAQPLPEESSGRPDDGLRPKRL. Residues 13–197 are large ATPase domain (RuvB-L); that stretch reads PRREPVLDAQ…FGLIQRLEFY (185 aa). Residues 28–41 are compositionally biased toward basic and acidic residues; that stretch reads SSGRPDDGLRPKRL. ATP-binding residues include Leu36, Arg37, Gly78, Lys81, Thr82, Thr83, Arg187, Tyr197, and Arg234. Thr82 contacts Mg(2+). The tract at residues 198-269 is small ATPAse domain (RuvB-S); the sequence is GQEDLEAIVS…LVSQALSLHR (72 aa). Positions 272–348 are head domain (RuvB-H); it reads HRGLDAGDRR…RAHLREQEVA (77 aa). DNA contacts are provided by Arg327 and Arg332.

It belongs to the RuvB family. As to quaternary structure, homohexamer. Forms an RuvA(8)-RuvB(12)-Holliday junction (HJ) complex. HJ DNA is sandwiched between 2 RuvA tetramers; dsDNA enters through RuvA and exits via RuvB. An RuvB hexamer assembles on each DNA strand where it exits the tetramer. Each RuvB hexamer is contacted by two RuvA subunits (via domain III) on 2 adjacent RuvB subunits; this complex drives branch migration. In the full resolvosome a probable DNA-RuvA(4)-RuvB(12)-RuvC(2) complex forms which resolves the HJ.

The protein resides in the cytoplasm. The enzyme catalyses ATP + H2O = ADP + phosphate + H(+). The RuvA-RuvB-RuvC complex processes Holliday junction (HJ) DNA during genetic recombination and DNA repair, while the RuvA-RuvB complex plays an important role in the rescue of blocked DNA replication forks via replication fork reversal (RFR). RuvA specifically binds to HJ cruciform DNA, conferring on it an open structure. The RuvB hexamer acts as an ATP-dependent pump, pulling dsDNA into and through the RuvAB complex. RuvB forms 2 homohexamers on either side of HJ DNA bound by 1 or 2 RuvA tetramers; 4 subunits per hexamer contact DNA at a time. Coordinated motions by a converter formed by DNA-disengaged RuvB subunits stimulates ATP hydrolysis and nucleotide exchange. Immobilization of the converter enables RuvB to convert the ATP-contained energy into a lever motion, pulling 2 nucleotides of DNA out of the RuvA tetramer per ATP hydrolyzed, thus driving DNA branch migration. The RuvB motors rotate together with the DNA substrate, which together with the progressing nucleotide cycle form the mechanistic basis for DNA recombination by continuous HJ branch migration. Branch migration allows RuvC to scan DNA until it finds its consensus sequence, where it cleaves and resolves cruciform DNA. This chain is Holliday junction branch migration complex subunit RuvB, found in Parasynechococcus marenigrum (strain WH8102).